The primary structure comprises 509 residues: Dye-decolorizing peroxidase AauDyP1 (509 aa).

Positions 1-22 are cleaved as a signal peptide; the sequence is MRLSPVFVALLSGLLAADLGLA. Residues 23 to 61 constitute a propeptide that is removed on maturation; the sequence is RSVAPRVADSPAAVTGTRKTSLLKNVAGLPPVPSAAQVA. Asp-229 functions as the Proton acceptor in the catalytic mechanism. An N-linked (GlcNAc...) asparagine glycan is attached at Asn-343. His-365 is a binding site for heme. 3 N-linked (GlcNAc...) asparagine glycosylation sites follow: Asn-383, Asn-410, and Asn-476.

This sequence belongs to the DyP-type peroxidase family. It depends on heme b as a cofactor.

The protein resides in the secreted. The catalysed reaction is Reactive Blue 5 + 2 H2O2 = 2,2'-disulfonyl azobenzene + 3-[(4-amino-6-chloro-1,3,5-triazin-2-yl)amino]benzenesulfonate + phthalate + 2 H2O + 2 H(+). The enzyme catalyses 2 a phenolic donor + H2O2 = 2 a phenolic radical donor + 2 H2O. With respect to regulation, inhibited by imidazole. In terms of biological role, manganese-independent peroxidase that is able to convert a large number of compounds, but its physiological substrate is not known. In addition to classic peroxidase substrates (e.g. 2,6-dimethoxyphenol), oxidizes dyes such as Reactive Blue 5 and Reactive Black 5. In Auricularia auricula-judae (Judas ear fungus), this protein is Dye-decolorizing peroxidase AauDyP1.